Consider the following 164-residue polypeptide: Putative 4-hydroxy-4-methyl-2-oxoglutarate aldolase (164 aa).

Substrate contacts are provided by residues G80 to L83 and R102. D103 is a binding site for a divalent metal cation.

This sequence belongs to the class II aldolase/RraA-like family. In terms of assembly, homotrimer. A divalent metal cation serves as cofactor.

It carries out the reaction 4-hydroxy-4-methyl-2-oxoglutarate = 2 pyruvate. The catalysed reaction is oxaloacetate + H(+) = pyruvate + CO2. Catalyzes the aldol cleavage of 4-hydroxy-4-methyl-2-oxoglutarate (HMG) into 2 molecules of pyruvate. Also contains a secondary oxaloacetate (OAA) decarboxylase activity due to the common pyruvate enolate transition state formed following C-C bond cleavage in the retro-aldol and decarboxylation reactions. The protein is Putative 4-hydroxy-4-methyl-2-oxoglutarate aldolase of Paraburkholderia phymatum (strain DSM 17167 / CIP 108236 / LMG 21445 / STM815) (Burkholderia phymatum).